A 177-amino-acid polypeptide reads, in one-letter code: Peptide deformylase (177 aa).

Fe cation-binding residues include Cys-99 and His-141. The active site involves Glu-142. His-145 provides a ligand contact to Fe cation.

Belongs to the polypeptide deformylase family. Fe(2+) is required as a cofactor.

It carries out the reaction N-terminal N-formyl-L-methionyl-[peptide] + H2O = N-terminal L-methionyl-[peptide] + formate. Its function is as follows. Removes the formyl group from the N-terminal Met of newly synthesized proteins. Requires at least a dipeptide for an efficient rate of reaction. N-terminal L-methionine is a prerequisite for activity but the enzyme has broad specificity at other positions. The chain is Peptide deformylase from Rhizorhabdus wittichii (strain DSM 6014 / CCUG 31198 / JCM 15750 / NBRC 105917 / EY 4224 / RW1) (Sphingomonas wittichii).